A 694-amino-acid polypeptide reads, in one-letter code: Methionine--tRNA ligase (694 aa).

Residues Pro-12 to His-22 carry the 'HIGH' region motif. 4 residues coordinate Zn(2+): Cys-143, Cys-146, Cys-156, and Cys-159. A 'KMSKS' region motif is present at residues Lys-330–Ser-334. Lys-333 contributes to the ATP binding site. The interval Ala-552–Pro-577 is disordered. Positions Asp-591–Arg-694 constitute a tRNA-binding domain.

The protein belongs to the class-I aminoacyl-tRNA synthetase family. MetG type 1 subfamily. In terms of assembly, homodimer. Zn(2+) is required as a cofactor.

It localises to the cytoplasm. The enzyme catalyses tRNA(Met) + L-methionine + ATP = L-methionyl-tRNA(Met) + AMP + diphosphate. In terms of biological role, is required not only for elongation of protein synthesis but also for the initiation of all mRNA translation through initiator tRNA(fMet) aminoacylation. This is Methionine--tRNA ligase from Xanthomonas campestris pv. campestris (strain B100).